Here is a 226-residue protein sequence, read N- to C-terminus: Elongation factor 1-delta 2 (226 aa).

The tract at residues 82-131 is disordered; it reads TACSVSPTADQKAPAADEEDDDDVDLFGEETEEEKKAAEERAAAVKASGK. The segment covering 97 to 113 has biased composition (acidic residues); it reads ADEEDDDDVDLFGEETE. A compositionally biased stretch (basic and acidic residues) spans 114 to 124; the sequence is EEKKAAEERAA.

Belongs to the EF-1-beta/EF-1-delta family. As to quaternary structure, EF-1 is composed of 4 subunits: alpha, beta (1B-alpha=beta'), delta (1B-beta), and gamma (1B-gamma).

In terms of biological role, EF-1-beta and EF-1-beta' stimulate the exchange of GDP bound to EF-1-alpha to GTP. In Oryza sativa subsp. japonica (Rice), this protein is Elongation factor 1-delta 2.